A 408-amino-acid chain; its full sequence is MTEVEEPEQPTTINEEYDLWVSNVPMMYDFVSETRLTWPSLTVQWLPTEMQPREVDGQQLLRQELLIGTLTTDNEPNYLKIAAIDLPENVTSSKPSVSDDAKENELSHRQSKIKIVRKFKHEQEVTRARYMPQSPNIIATLNGAGIVYIFDRNIKEKDHGAIASFSYHKENGYGLAFNPTVSGQLLSASDDGTVALWDVTSTANKSPSQTFDVHTDIVNDCKWHEFQSSLFGTVSEDNTLIIHDTNSDRAIQKLSVSSAFNTLAFSKRSENLLAAAGTDSNVYLYDLRRLQKPLHSMAGHEDSVTSLEFSPHQDGLLTSSGSDRRIIMWDLFNIGAEQQPDDAYDGVPELFMMHGGHRSPVNEFSHNSNVPWLMCSVEEENVLQIWKPANKIVRPPQPPADFDITTLE.

WD repeat units follow at residues 120–160 (KHEQ…KDHG), 167–207 (YHKE…NKSP), 213–253 (VHTD…AIQK), 255–295 (SVSS…KPLH), and 299–339 (GHED…AEQQ). Positions 341 to 345 (DDAYD) are interaction with the histone H4 N-terminus. One copy of the WD 6 repeat lies at 356-396 (GHRSPVNEFSHNSNVPWLMCSVEEENVLQIWKPANKIVRPP).

This sequence belongs to the WD repeat RBAP46/RBAP48/MSI1 family. Component of the HAT-B complex composed of at least HAT1 and HAT2. The HAT-B complex binds to histone H4 tail.

The protein resides in the cytoplasm. It is found in the nucleus. Functionally, regulatory subunit of the histone acetylase B (HAT-B) complex. The complex acetylates 'Lys-12' of histone H4 which is required for telomeric silencing. The sequence is that of Histone acetyltransferase type B subunit 2 (HAT2) from Kluyveromyces lactis (strain ATCC 8585 / CBS 2359 / DSM 70799 / NBRC 1267 / NRRL Y-1140 / WM37) (Yeast).